Here is a 497-residue protein sequence, read N- to C-terminus: NAD(P)H-quinone oxidoreductase chain 4, chloroplastic (497 aa).

The next 13 helical transmembrane spans lie at Leu-4–Phe-24, Tyr-35–Phe-55, Met-87–Val-107, Leu-113–Asp-133, Ile-134–Ile-154, Phe-167–Leu-187, Ile-207–Ile-227, His-242–Ile-262, Ala-274–Ile-294, Met-313–Leu-333, Leu-386–Ile-406, Ile-416–Met-436, and Ile-462–Val-482.

This sequence belongs to the complex I subunit 4 family.

It localises to the plastid. Its subcellular location is the chloroplast thylakoid membrane. It carries out the reaction a plastoquinone + NADH + (n+1) H(+)(in) = a plastoquinol + NAD(+) + n H(+)(out). It catalyses the reaction a plastoquinone + NADPH + (n+1) H(+)(in) = a plastoquinol + NADP(+) + n H(+)(out). This Angiopteris evecta (Mule's foot fern) protein is NAD(P)H-quinone oxidoreductase chain 4, chloroplastic.